The following is a 435-amino-acid chain: UDP-N-acetylmuramate--L-alanine ligase (435 aa).

108–114 (GSHGKTS) is a binding site for ATP.

It belongs to the MurCDEF family.

The protein resides in the cytoplasm. It carries out the reaction UDP-N-acetyl-alpha-D-muramate + L-alanine + ATP = UDP-N-acetyl-alpha-D-muramoyl-L-alanine + ADP + phosphate + H(+). It participates in cell wall biogenesis; peptidoglycan biosynthesis. Functionally, cell wall formation. This Exiguobacterium sp. (strain ATCC BAA-1283 / AT1b) protein is UDP-N-acetylmuramate--L-alanine ligase.